A 184-amino-acid chain; its full sequence is MEADDHVSLFRFPFKIPTFRGIRKGGVYLSGALYALGFWIFLDAVLYSRYSNASDVHVTFIDWIPFLCSTLGTLIVNSIEKNRLLQGALSSDGGAFGSGVGDLDSSMAWQARTVLFFGFALLAGGLSGSIVVLIIKFLVKDYNTYPTLGMGVNNVLGNVCILLSCVVLWIAQNVEDEYSYSLTL.

Met1 carries the post-translational modification N-acetylmethionine. Ser8 carries the post-translational modification Phosphoserine. A helical membrane pass occupies residues 26–46 (GVYLSGALYALGFWIFLDAVL). An N-linked (GlcNAc...) asparagine glycan is attached at Asn52. The next 3 membrane-spanning stretches (helical) occupy residues 56-76 (VHVT…TLIV), 115-135 (LFFG…VLII), and 150-170 (MGVN…VLWI).

It belongs to the UPF0220 family.

Its subcellular location is the vacuole membrane. The protein resides in the mitochondrion. Functionally, involved in vacuolar protein sorting. The sequence is that of Vacuolar protein sorting-associated protein 68 (VPS68) from Saccharomyces cerevisiae (strain ATCC 204508 / S288c) (Baker's yeast).